The primary structure comprises 436 residues: tRNA pseudouridine synthase Pus10 (436 aa).

The active-site Nucleophile is the Asp-254. Positions 322 and 394 each coordinate substrate.

It belongs to the pseudouridine synthase Pus10 family.

The enzyme catalyses uridine(54) in tRNA = pseudouridine(54) in tRNA. It catalyses the reaction uridine(55) in tRNA = pseudouridine(55) in tRNA. Responsible for synthesis of pseudouridine from uracil-54 and uracil-55 in the psi GC loop of transfer RNAs. This chain is tRNA pseudouridine synthase Pus10, found in Methanopyrus kandleri (strain AV19 / DSM 6324 / JCM 9639 / NBRC 100938).